Consider the following 124-residue polypeptide: Multifunctional methyltransferase subunit TRM112 homolog B (124 aa).

Positions 2 to 120 constitute a TRM112 domain; it reads RLIVHNMLSC…SKGIPNMLLH (119 aa).

This sequence belongs to the TRM112 family. In terms of assembly, interacts with TRM9. Expressed in anthers.

Acts as an activator of both rRNA/tRNA and protein methyltransferases. Required for TRM9 tRNA methyltransferase activity. This is Multifunctional methyltransferase subunit TRM112 homolog B from Arabidopsis thaliana (Mouse-ear cress).